The primary structure comprises 95 residues: Cell division topological specificity factor (95 aa).

The protein belongs to the MinE family.

Functionally, prevents the cell division inhibition by proteins MinC and MinD at internal division sites while permitting inhibition at polar sites. This ensures cell division at the proper site by restricting the formation of a division septum at the midpoint of the long axis of the cell. In Methylorubrum extorquens (strain CM4 / NCIMB 13688) (Methylobacterium extorquens), this protein is Cell division topological specificity factor.